Here is a 144-residue protein sequence, read N- to C-terminus: uncharacterized protein (144 aa).

The next 4 helical transmembrane spans lie at 27–47 (VVCA…IPDI), 49–69 (LLPI…LLAL), 83–103 (IVLL…DATV), and 106–126 (ALDM…ILNV).

It is found in the membrane. This is an uncharacterized protein from Saccharomyces cerevisiae (strain ATCC 204508 / S288c) (Baker's yeast).